Here is a 385-residue protein sequence, read N- to C-terminus: Homoserine O-succinyltransferase (385 aa).

The 310-residue stretch at 51–360 folds into the AB hydrolase-1 domain; sequence NAVLICHALS…DSPHGHDAFL (310 aa). The Nucleophile role is filled by Ser-157. Arg-227 serves as a coordination point for substrate. Catalysis depends on residues Asp-323 and His-356. Asp-357 contacts substrate.

This sequence belongs to the AB hydrolase superfamily. MetX family. In terms of assembly, homodimer.

The protein resides in the cytoplasm. The enzyme catalyses L-homoserine + succinyl-CoA = O-succinyl-L-homoserine + CoA. It functions in the pathway amino-acid biosynthesis; L-methionine biosynthesis via de novo pathway; O-succinyl-L-homoserine from L-homoserine: step 1/1. Its function is as follows. Transfers a succinyl group from succinyl-CoA to L-homoserine, forming succinyl-L-homoserine. The polypeptide is Homoserine O-succinyltransferase (Hahella chejuensis (strain KCTC 2396)).